Reading from the N-terminus, the 558-residue chain is Pre-mRNA-processing factor 17 (558 aa).

2 disordered regions span residues 1–23 and 117–197; these read MLVA…NIQP and DDNE…GQNE. The segment covering 126-141 has biased composition (basic and acidic residues); that stretch reads DLKRKSQKIKERREDP. A compositionally biased stretch (low complexity) spans 162 to 171; sequence SEQSSSPLEY. The span at 180–189 shows a compositional bias: basic and acidic residues; that stretch reads LDVKSEKDTE. 7 WD repeats span residues 264-304, 308-349, 351-391, 394-433, 437-476, 484-523, and 526-558; these read GHTK…SLLR, GHAR…NCFN, DRLT…IVQA, HHLG…PIKF, IAMH…RQNK, SCSG…LMAK, and AHSG…KYWD.

Belongs to the 40S cdc5-associated complex (or cwf complex), a spliceosome sub-complex reminiscent of a late-stage spliceosome composed of the U2, U5 and U6 snRNAs and at least brr2, cdc5, cwf2/prp3, cwf3/syf1, cwf4/syf3, cwf5/ecm2, spp42/cwf6, cwf7/spf27, cwf8, cwf9, cwf10, cwf11, cwf12, prp45/cwf13, cwf14, cwf15, cwf16, cwf17, cwf18, cwf19, cwf20, cwf21, cwf22, cwf23, cwf24, cwf25, cwf26, cyp7/cwf27, cwf28, cwf29/ist3, lea1, msl1, prp5/cwf1, prp10, prp12/sap130, prp17, prp22, sap61, sap62, sap114, sap145, slu7, smb1, smd1, smd3, smf1, smg1 and syf2.

The protein localises to the nucleus. Functions in the second step of pre-mRNA splicing. Involved in splicing intron which are longer than 200 nucleotides. This chain is Pre-mRNA-processing factor 17 (prp17), found in Schizosaccharomyces pombe (strain 972 / ATCC 24843) (Fission yeast).